Here is a 209-residue protein sequence, read N- to C-terminus: Small ribosomal subunit protein uS3 (209 aa).

The KH type-2 domain occupies 38 to 107; that stretch reads IRKVVKNAYS…RVIVNVEEIK (70 aa).

The protein belongs to the universal ribosomal protein uS3 family. As to quaternary structure, part of the 30S ribosomal subunit. Forms a tight complex with proteins S10 and S14.

In terms of biological role, binds the lower part of the 30S subunit head. Binds mRNA in the 70S ribosome, positioning it for translation. The polypeptide is Small ribosomal subunit protein uS3 (Pseudothermotoga lettingae (strain ATCC BAA-301 / DSM 14385 / NBRC 107922 / TMO) (Thermotoga lettingae)).